Here is a 208-residue protein sequence, read N- to C-terminus: Sodium/potassium-transporting ATPase subunit beta-1-interacting protein 4 (208 aa).

3 consecutive transmembrane segments (helical) span residues 35–55 (APIL…FGTI), 62–82 (VMVY…IICF), and 151–171 (CLQI…VSVF).

It belongs to the NKAIN family. Interacts with ATP1B1.

It is found in the cell membrane. This chain is Sodium/potassium-transporting ATPase subunit beta-1-interacting protein 4 (NKAIN4), found in Homo sapiens (Human).